Here is a 272-residue protein sequence, read N- to C-terminus: Cytochrome b-c1 complex subunit Rieske, mitochondrial (272 aa).

Over 77–104 the chain is Mitochondrial matrix; it reads VHNDVTVPDFSAYRREDVMDATTSSQTS. Residues 105 to 138 form a helical membrane-spanning segment; the sequence is SEDRKGFSYLVTATACVATAYAAKNVVTQFISSL. Residues 139–272 lie on the Mitochondrial intermembrane side of the membrane; that stretch reads SASADVLALS…FVGDDLVVVG (134 aa). The region spanning 185 to 270 is the Rieske domain; it reads EAEVDVSKLR…YQFVGDDLVV (86 aa). 6 residues coordinate [2Fe-2S] cluster: Cys-215, His-217, Leu-218, Cys-234, His-237, and Ser-239. Cys-220 and Cys-236 are oxidised to a cystine.

Belongs to the Rieske iron-sulfur protein family. As to quaternary structure, component of the ubiquinol-cytochrome c oxidoreductase (cytochrome b-c1 complex, complex III, CIII), a multisubunit enzyme composed of 11 subunits. The complex is composed of 3 respiratory subunits cytochrome b, cytochrome c1 and Rieske protein UQCRFS1, 2 core protein subunits UQCRC1/QCR1 and UQCRC2/QCR2, and 6 low-molecular weight protein subunits UQCRH/QCR6, UQCRB/QCR7, UQCRQ/QCR8, UQCR10/QCR9, UQCR11/QCR10 and subunit 9, the cleavage product of Rieske protein UQCRFS1. The complex exists as an obligatory dimer and forms supercomplexes (SCs) in the inner mitochondrial membrane with NADH-ubiquinone oxidoreductase (complex I, CI) and cytochrome c oxidase (complex IV, CIV), resulting in different assemblies (supercomplex SCI(1)III(2)IV(1) and megacomplex MCI(2)III(2)IV(2)). Incorporation of the Rieske protein UQCRFS1 is the penultimate step in complex III assembly. Interacts with TTC19, which is involved in the clearance of UQCRFS1 fragments. In terms of assembly, component of the ubiquinol-cytochrome c oxidoreductase (cytochrome b-c1 complex, complex III, CIII). Subunit 9 corresponds to the mitochondrial targeting sequence (MTS) of Rieske protein UQCRFS1. It is retained after processing and incorporated inside complex III, where it remains bound to the complex and localizes between the 2 core subunits UQCRC1/QCR1 and UQCRC2/QCR2. It depends on [2Fe-2S] cluster as a cofactor. Post-translationally, proteolytic processing is necessary for the correct insertion of UQCRFS1 in the complex III dimer. Several fragments are generated during UQCRFS1 insertion, most probably due to the endogenous matrix-processing peptidase (MPP) activity of the 2 core protein subunits UQCRC1/QCR1 and UQCRC2/QCR2, which are homologous to the 2 mitochondrial-processing peptidase (MPP) subunits beta-MPP and alpha-MPP respectively. The action of the protease is also necessary for the clearance of the UQCRFS1 fragments.

It is found in the mitochondrion inner membrane. It catalyses the reaction a quinol + 2 Fe(III)-[cytochrome c](out) = a quinone + 2 Fe(II)-[cytochrome c](out) + 2 H(+)(out). Component of the ubiquinol-cytochrome c oxidoreductase, a multisubunit transmembrane complex that is part of the mitochondrial electron transport chain which drives oxidative phosphorylation. The respiratory chain contains 3 multisubunit complexes succinate dehydrogenase (complex II, CII), ubiquinol-cytochrome c oxidoreductase (cytochrome b-c1 complex, complex III, CIII) and cytochrome c oxidase (complex IV, CIV), that cooperate to transfer electrons derived from NADH and succinate to molecular oxygen, creating an electrochemical gradient over the inner membrane that drives transmembrane transport and the ATP synthase. The cytochrome b-c1 complex catalyzes electron transfer from ubiquinol to cytochrome c, linking this redox reaction to translocation of protons across the mitochondrial inner membrane, with protons being carried across the membrane as hydrogens on the quinol. In the process called Q cycle, 2 protons are consumed from the matrix, 4 protons are released into the intermembrane space and 2 electrons are passed to cytochrome c. The Rieske protein is a catalytic core subunit containing a [2Fe-2S] iron-sulfur cluster. It cycles between 2 conformational states during catalysis to transfer electrons from the quinol bound in the Q(0) site in cytochrome b to cytochrome c1. Incorporation of UQCRFS1 is the penultimate step in complex III assembly. In terms of biological role, component of the ubiquinol-cytochrome c oxidoreductase (cytochrome b-c1 complex, complex III, CIII). UQCRFS1 undergoes proteolytic processing once it is incorporated in the complex III dimer. One of the fragments, called subunit 9, corresponds to its mitochondrial targeting sequence (MTS). The proteolytic processing is necessary for the correct insertion of UQCRFS1 in the complex III dimer, but the persistence of UQCRFS1-derived fragments may prevent newly imported UQCRFS1 to be processed and assembled into complex III and is detrimental for the complex III structure and function. This is Cytochrome b-c1 complex subunit Rieske, mitochondrial (UQCRFS1) from Gallus gallus (Chicken).